The following is a 159-amino-acid chain: NADH-quinone oxidoreductase subunit B (159 aa).

[4Fe-4S] cluster-binding residues include Cys-37, Cys-38, Cys-102, and Cys-132.

It belongs to the complex I 20 kDa subunit family. As to quaternary structure, NDH-1 is composed of 14 different subunits. Subunits NuoB, C, D, E, F, and G constitute the peripheral sector of the complex. The cofactor is [4Fe-4S] cluster.

The protein resides in the cell inner membrane. The enzyme catalyses a quinone + NADH + 5 H(+)(in) = a quinol + NAD(+) + 4 H(+)(out). NDH-1 shuttles electrons from NADH, via FMN and iron-sulfur (Fe-S) centers, to quinones in the respiratory chain. Couples the redox reaction to proton translocation (for every two electrons transferred, four hydrogen ions are translocated across the cytoplasmic membrane), and thus conserves the redox energy in a proton gradient. The protein is NADH-quinone oxidoreductase subunit B of Vesicomyosocius okutanii subsp. Calyptogena okutanii (strain HA).